A 181-amino-acid chain; its full sequence is Adenine phosphoribosyltransferase (181 aa).

This sequence belongs to the purine/pyrimidine phosphoribosyltransferase family. Homodimer.

It is found in the cytoplasm. It catalyses the reaction AMP + diphosphate = 5-phospho-alpha-D-ribose 1-diphosphate + adenine. Its pathway is purine metabolism; AMP biosynthesis via salvage pathway; AMP from adenine: step 1/1. Its function is as follows. Catalyzes a salvage reaction resulting in the formation of AMP, that is energically less costly than de novo synthesis. In Mesorhizobium japonicum (strain LMG 29417 / CECT 9101 / MAFF 303099) (Mesorhizobium loti (strain MAFF 303099)), this protein is Adenine phosphoribosyltransferase.